A 650-amino-acid chain; its full sequence is MIHDLLLACRSHNPEQLGIKAFNETTVIDQFIHPCEREIFMDIIKIIKVYQEVEQFTHSSGRKSDTHGELPDSLHGYYLLNLAKGIEMALEEYYAEIGRLEKYCLGNERNSLSYVYNALYAKFPLLVFMRNLITEIHVLNLRGCVLLHNLHQQCEHGDIQLEKAIKIIMKPVKNAFFSSLAHWLLFGVIDDVHSEFFIKFTPTDAVDGSSFSKSATCSLLSAEKNPEDYIWQYEVNMSQLPGFFSIVLAEKVLFVGQTVLVFKMGRNVKVKNKTDPLAAKLAELDSDDIYQLWSGRESEFFKMVVDLSNEDTINVFRLEKVIIDIKNYVSARLSEIAVNEVDLERQMGLIKDFFLLGRGEFYLEFCSQMVGTMETYREERFKNVTRSFELAATVTGITDDLDKFSLICQRSTSEPDDTSDFNFLQGLSLKYEYEWPLNLLFSPTTIERYNNIFRFLLIIRTYQYEIQRVWAKQTWRAKSAKDVPPNNKIITLRNYLMFFLNNMQYYIQVDVLESQFGILMNVIKSRSDFEVIQRAHTVFLANVLSHCFLLNESETQLNVTGSQNRNPIYGTLLKLFGICEKFAHMTQTKDPSDDLEDEVDQLNESFGVQIASLIQLLVDVKSASCLGPLSQLLLRLDFNCWFSASHNTSA.

Residue S214 is modified to Phosphoserine. Residue T216 is modified to Phosphothreonine. S218 is subject to Phosphoserine.

The protein belongs to the TUBGCP family.

It is found in the cytoplasm. It localises to the cytoskeleton. Its subcellular location is the microtubule organizing center. The protein localises to the centrosome. Its function is as follows. Gamma-tubulin complex is necessary for microtubule nucleation at the centrosome. This Drosophila melanogaster (Fruit fly) protein is Gamma-tubulin complex component 4 homolog (Grip75).